Reading from the N-terminus, the 278-residue chain is MQIMLCAISNIASGNCSEDCKYCTQSAHVRTDIQKYRRKELSQIVLEAKMAKKNEALGFCLVTAGLGLDDEKLEYVCEAAKAVQKEVPNLLLIACNGMASVEQLKELKKAGIFSYNHNLETSKEFFPQICTTHTWESRFQTNLNAKEAGLMLCCGGIYGMGESEENRLSFRKSLQELQPFSTPINFFIANENLKLQTPRLSADEALKIVRDTKEALPQSVVMVAGGREVVLQERQYEIFQAGAGAIVIGDYLTTKGEEPSQDIIKLKEMGFTFASECH.

Positions 1–227 constitute a Radical SAM core domain; it reads MQIMLCAISN…QSVVMVAGGR (227 aa). The [4Fe-4S] cluster site is built by Cys-16, Cys-20, and Cys-23. Residues Cys-60, Cys-95, and Cys-153 each contribute to the [2Fe-2S] cluster site.

It belongs to the radical SAM superfamily. Biotin synthase family. Homodimer. It depends on [4Fe-4S] cluster as a cofactor. [2Fe-2S] cluster is required as a cofactor.

The catalysed reaction is (4R,5S)-dethiobiotin + (sulfur carrier)-SH + 2 reduced [2Fe-2S]-[ferredoxin] + 2 S-adenosyl-L-methionine = (sulfur carrier)-H + biotin + 2 5'-deoxyadenosine + 2 L-methionine + 2 oxidized [2Fe-2S]-[ferredoxin]. It functions in the pathway cofactor biosynthesis; biotin biosynthesis; biotin from 7,8-diaminononanoate: step 2/2. Functionally, catalyzes the conversion of dethiobiotin (DTB) to biotin by the insertion of a sulfur atom into dethiobiotin via a radical-based mechanism. This is Biotin synthase from Campylobacter jejuni subsp. doylei (strain ATCC BAA-1458 / RM4099 / 269.97).